A 454-amino-acid polypeptide reads, in one-letter code: Histidine--tRNA ligase (454 aa).

The protein belongs to the class-II aminoacyl-tRNA synthetase family. As to quaternary structure, homodimer.

It localises to the cytoplasm. It catalyses the reaction tRNA(His) + L-histidine + ATP = L-histidyl-tRNA(His) + AMP + diphosphate + H(+). The polypeptide is Histidine--tRNA ligase (Bacteroides fragilis (strain ATCC 25285 / DSM 2151 / CCUG 4856 / JCM 11019 / LMG 10263 / NCTC 9343 / Onslow / VPI 2553 / EN-2)).